The primary structure comprises 358 residues: DNA polymerase IV (358 aa).

Residues 4–185 form the UmuC domain; it reads IIHIDMDCYF…LSLRKIPGVG (182 aa). Residues aspartate 8 and aspartate 103 each coordinate Mg(2+). Glutamate 104 is an active-site residue.

Belongs to the DNA polymerase type-Y family. In terms of assembly, monomer. Requires Mg(2+) as cofactor.

The protein localises to the cytoplasm. The enzyme catalyses DNA(n) + a 2'-deoxyribonucleoside 5'-triphosphate = DNA(n+1) + diphosphate. Poorly processive, error-prone DNA polymerase involved in untargeted mutagenesis. Copies undamaged DNA at stalled replication forks, which arise in vivo from mismatched or misaligned primer ends. These misaligned primers can be extended by PolIV. Exhibits no 3'-5' exonuclease (proofreading) activity. May be involved in translesional synthesis, in conjunction with the beta clamp from PolIII. The protein is DNA polymerase IV of Shewanella sp. (strain W3-18-1).